The chain runs to 278 residues: ATP-dependent dethiobiotin synthetase BioD 1 (278 aa).

51 to 56 is an ATP binding site; sequence NVGKTI. Thr-55 is a Mg(2+) binding site. Lys-76 is an active-site residue. Residue Asp-102 participates in ATP binding. Residues Asp-102 and Glu-163 each contribute to the Mg(2+) site. Residues 223 to 224 and 252 to 254 contribute to the ATP site; these read NR and PYI.

The protein belongs to the dethiobiotin synthetase family. In terms of assembly, homodimer. Mg(2+) serves as cofactor.

The protein localises to the cytoplasm. The enzyme catalyses (7R,8S)-7,8-diammoniononanoate + CO2 + ATP = (4R,5S)-dethiobiotin + ADP + phosphate + 3 H(+). It functions in the pathway cofactor biosynthesis; biotin biosynthesis; biotin from 7,8-diaminononanoate: step 1/2. Its function is as follows. Catalyzes a mechanistically unusual reaction, the ATP-dependent insertion of CO2 between the N7 and N8 nitrogen atoms of 7,8-diaminopelargonic acid (DAPA, also called 7,8-diammoniononanoate) to form a ureido ring. In Haemophilus ducreyi (strain 35000HP / ATCC 700724), this protein is ATP-dependent dethiobiotin synthetase BioD 1.